We begin with the raw amino-acid sequence, 416 residues long: Serine hydroxymethyltransferase (416 aa).

(6S)-5,6,7,8-tetrahydrofolate is bound by residues leucine 118 and 122–124; that span reads GHL. The residue at position 227 (lysine 227) is an N6-(pyridoxal phosphate)lysine. Residues glutamate 242 and 350–352 contribute to the (6S)-5,6,7,8-tetrahydrofolate site; that span reads SPF.

The protein belongs to the SHMT family. In terms of assembly, homodimer. Pyridoxal 5'-phosphate is required as a cofactor.

The protein resides in the cytoplasm. The enzyme catalyses (6R)-5,10-methylene-5,6,7,8-tetrahydrofolate + glycine + H2O = (6S)-5,6,7,8-tetrahydrofolate + L-serine. Its pathway is one-carbon metabolism; tetrahydrofolate interconversion. It functions in the pathway amino-acid biosynthesis; glycine biosynthesis; glycine from L-serine: step 1/1. Functionally, catalyzes the reversible interconversion of serine and glycine with tetrahydrofolate (THF) serving as the one-carbon carrier. This reaction serves as the major source of one-carbon groups required for the biosynthesis of purines, thymidylate, methionine, and other important biomolecules. Also exhibits THF-independent aldolase activity toward beta-hydroxyamino acids, producing glycine and aldehydes, via a retro-aldol mechanism. This Syntrophotalea carbinolica (strain DSM 2380 / NBRC 103641 / GraBd1) (Pelobacter carbinolicus) protein is Serine hydroxymethyltransferase.